Here is a 248-residue protein sequence, read N- to C-terminus: Probable transcriptional regulatory protein Oant_1200 (248 aa).

This sequence belongs to the TACO1 family.

Its subcellular location is the cytoplasm. The chain is Probable transcriptional regulatory protein Oant_1200 from Brucella anthropi (strain ATCC 49188 / DSM 6882 / CCUG 24695 / JCM 21032 / LMG 3331 / NBRC 15819 / NCTC 12168 / Alc 37) (Ochrobactrum anthropi).